The primary structure comprises 224 residues: ATP-dependent dethiobiotin synthetase BioD (224 aa).

A Mg(2+)-binding site is contributed by Thr-18. Lys-39 is a catalytic residue. Ser-43 lines the substrate pocket. Mg(2+) contacts are provided by Asp-56 and Glu-117. ATP contacts are provided by residues Asp-56, Glu-117–Gly-120, and Asn-177–Glu-178.

This sequence belongs to the dethiobiotin synthetase family. Homodimer. The cofactor is Mg(2+).

It is found in the cytoplasm. The catalysed reaction is (7R,8S)-7,8-diammoniononanoate + CO2 + ATP = (4R,5S)-dethiobiotin + ADP + phosphate + 3 H(+). The protein operates within cofactor biosynthesis; biotin biosynthesis; biotin from 7,8-diaminononanoate: step 1/2. Functionally, catalyzes a mechanistically unusual reaction, the ATP-dependent insertion of CO2 between the N7 and N8 nitrogen atoms of 7,8-diaminopelargonic acid (DAPA, also called 7,8-diammoniononanoate) to form a ureido ring. This chain is ATP-dependent dethiobiotin synthetase BioD, found in Xanthomonas euvesicatoria pv. vesicatoria (strain 85-10) (Xanthomonas campestris pv. vesicatoria).